Consider the following 154-residue polypeptide: Deoxyuridine 5'-triphosphate nucleotidohydrolase (154 aa).

Substrate is bound by residues 70-72 (RSG), Asn83, 87-89 (LID), and Met97.

Belongs to the dUTPase family. Requires Mg(2+) as cofactor.

The enzyme catalyses dUTP + H2O = dUMP + diphosphate + H(+). It participates in pyrimidine metabolism; dUMP biosynthesis; dUMP from dCTP (dUTP route): step 2/2. Its function is as follows. This enzyme is involved in nucleotide metabolism: it produces dUMP, the immediate precursor of thymidine nucleotides and it decreases the intracellular concentration of dUTP so that uracil cannot be incorporated into DNA. The polypeptide is Deoxyuridine 5'-triphosphate nucleotidohydrolase (Buchnera aphidicola subsp. Acyrthosiphon pisum (strain 5A)).